We begin with the raw amino-acid sequence, 258 residues long: Synaptosomal-associated protein 29 (258 aa).

The disordered stretch occupies residues 1–41; the sequence is MSAYPKSYNPFDDDGEDEGARPAPWRDARDLPDGPDAPADR. Over residues 18 to 32 the composition is skewed to basic and acidic residues; that stretch reads EGARPAPWRDARDLP. Residues 76–107 are a coiled coil; sequence ASSEELARQRGVLERTEKMVDKMDQDLKISQK. Residues Ser-77, Ser-78, and Ser-114 each carry the phosphoserine modification. The interval 127 to 190 is disordered; sequence PVETPPEQNG…GSAVSTDAYP (64 aa). 2 positions are modified to phosphothreonine: Thr-130 and Thr-137. Positions 132–144 are enriched in polar residues; sequence PEQNGTLASQPNS. Residues Ser-163, Ser-182, Ser-185, Ser-204, and Ser-210 each carry the phosphoserine modification. A t-SNARE coiled-coil homology domain is found at 196–258; it reads QAYHQKIDSN…KSTERKVRQL (63 aa).

This sequence belongs to the SNAP-25 family. As to quaternary structure, forms a SNARE complex, composed of VAMP8, SNAP29 and STX17, involved in fusion of autophagosome with lysosome. Interacts with multiple syntaxins including STX6. Interacts with EIPR1. Interacts with STX17; this interaction is increased in the absence of TMEM39A.

Its subcellular location is the cytoplasm. It localises to the golgi apparatus membrane. The protein resides in the cytoplasmic vesicle. It is found in the autophagosome membrane. The protein localises to the cell projection. Its subcellular location is the cilium membrane. Its function is as follows. SNAREs, soluble N-ethylmaleimide-sensitive factor-attachment protein receptors, are essential proteins for fusion of cellular membranes. SNAREs localized on opposing membranes assemble to form a trans-SNARE complex, an extended, parallel four alpha-helical bundle that drives membrane fusion. SNAP29 is a SNARE involved in autophagy through the direct control of autophagosome membrane fusion with the lysososome membrane. Also plays a role in ciliogenesis by regulating membrane fusions. The protein is Synaptosomal-associated protein 29 of Pongo abelii (Sumatran orangutan).